We begin with the raw amino-acid sequence, 500 residues long: Lysine--tRNA ligase (500 aa).

2 residues coordinate Mg(2+): Glu-406 and Glu-413.

It belongs to the class-II aminoacyl-tRNA synthetase family. In terms of assembly, homodimer. It depends on Mg(2+) as a cofactor.

It is found in the cytoplasm. It carries out the reaction tRNA(Lys) + L-lysine + ATP = L-lysyl-tRNA(Lys) + AMP + diphosphate. This Sulfolobus acidocaldarius (strain ATCC 33909 / DSM 639 / JCM 8929 / NBRC 15157 / NCIMB 11770) protein is Lysine--tRNA ligase.